The sequence spans 558 residues: Dimethylaniline monooxygenase [N-oxide-forming] 4 (558 aa).

Residues 9–13 (GAGVS), Glu32, and 40–41 (LW) contribute to the FAD site. NADP(+) is bound by residues 60-61 (TN) and 195-198 (TGGD). A helical membrane pass occupies residues 517-537 (AWGAPVLLASLLLICKSSLFL).

It belongs to the FMO family. It depends on FAD as a cofactor. In terms of tissue distribution, liver.

Its subcellular location is the microsome membrane. It is found in the endoplasmic reticulum membrane. It catalyses the reaction N,N-dimethylaniline + NADPH + O2 + H(+) = N,N-dimethylaniline N-oxide + NADP(+) + H2O. In terms of biological role, this protein is involved in the oxidative metabolism of a variety of xenobiotics such as drugs and pesticides. This Homo sapiens (Human) protein is Dimethylaniline monooxygenase [N-oxide-forming] 4 (FMO4).